Reading from the N-terminus, the 232-residue chain is Ribonuclease P protein component 3 (232 aa).

It belongs to the eukaryotic/archaeal RNase P protein component 3 family. Consists of a catalytic RNA component and at least 4-5 protein subunits. Forms a subcomplex with Rnp2 which stimulates the catalytic RNA.

The protein localises to the cytoplasm. It carries out the reaction Endonucleolytic cleavage of RNA, removing 5'-extranucleotides from tRNA precursor.. Its function is as follows. Part of ribonuclease P, a protein complex that generates mature tRNA molecules by cleaving their 5'-ends. The sequence is that of Ribonuclease P protein component 3 from Methanocaldococcus jannaschii (strain ATCC 43067 / DSM 2661 / JAL-1 / JCM 10045 / NBRC 100440) (Methanococcus jannaschii).